Reading from the N-terminus, the 387-residue chain is Lactosylceramide alpha-2,3-sialyltransferase (387 aa).

At 1 to 33 (MPNEFTSAKLRSDCSRTSLQWYTQTQHKMRRPS) the chain is on the cytoplasmic side. The chain crosses the membrane as a helical; Signal-anchor for type II membrane protein span at residues 34–54 (LLLKDILKCMLVVFGVWLLYI). Residues 55–387 (LKLNYTAEEC…VVQDLSGGIH (333 aa)) lie on the Extracellular side of the membrane. Asn58 and Asn208 each carry an N-linked (GlcNAc...) asparagine glycan. A disulfide bridge links Cys167 with Cys325.

Belongs to the glycosyltransferase 29 family.

It localises to the golgi apparatus membrane. It catalyses the reaction a beta-D-Gal-(1-&gt;4)-beta-D-Glc-(1&lt;-&gt;1)-Cer(d18:1(4E)) + CMP-N-acetyl-beta-neuraminate = a ganglioside GM3 (d18:1(4E)) + CMP + H(+). The enzyme catalyses ganglioside GA2 (d18:1(4E)/18:0) + CMP-N-acetyl-beta-neuraminate = ganglioside GM2 (d18:1(4E)/18:0) + CMP + H(+). It carries out the reaction a beta-D-Gal-(1&lt;-&gt;1')-ceramide + CMP-N-acetyl-beta-neuraminate = N-acetyl-alpha-neuraminosyl-(2-&gt;3)-beta-D-galactosyl-(1&lt;-&gt;1')-ceramide + CMP + H(+). The catalysed reaction is ganglioside GA1 (d18:1(4E)/18:0) + CMP-N-acetyl-beta-neuraminate = ganglioside GM1 (d18:1(4E)/18:0) + CMP + H(+). Transfers the sialyl group (N-acetyl-alpha-neuraminyl or NeuAc) from CMP-NeuAc to the non-reducing terminal galactose (Gal) of glycosphingolipids forming gangliosides (important molecules involved in the regulation of multiple cellular processes, including cell proliferation and differentiation, apoptosis, embryogenesis, development, and oncogenesis). Mainly involved in the biosynthesis of ganglioside GM3 but can also use different glycolipids as substrate acceptors such as D-galactosylceramide (GalCer), asialo-GM2 (GA2) and asialo-GM1 (GA1), although less preferentially than beta-D-Gal-(1-&gt;4)-beta-D-Glc-(1&lt;-&gt;1)-Cer (LacCer). The chain is Lactosylceramide alpha-2,3-sialyltransferase (St3gal5) from Rattus norvegicus (Rat).